The following is a 456-amino-acid chain: Bifunctional protein GlmU (456 aa).

A pyrophosphorylase region spans residues 1 to 228; sequence MTLPLHVLIL…PQDVEGANDP (228 aa). UDP-N-acetyl-alpha-D-glucosamine is bound by residues 10 to 13, K24, Q76, 81 to 82, 103 to 105, G138, E153, N168, and N226; these read LAAG, GT, and YGD. D105 contributes to the Mg(2+) binding site. N226 is a binding site for Mg(2+). The linker stretch occupies residues 229-249; it reads WQLAQLERAWQLRAARTLCLQ. Residues 250–456 form an N-acetyltransferase region; sequence GVRMADPARV…GWKRPTKKSP (207 aa). Residues R332 and K350 each contribute to the UDP-N-acetyl-alpha-D-glucosamine site. H362 serves as the catalytic Proton acceptor. 2 residues coordinate UDP-N-acetyl-alpha-D-glucosamine: Y365 and N376. Acetyl-CoA contacts are provided by residues A379, 385 to 386, S404, A422, and R439; that span reads NY.

In the N-terminal section; belongs to the N-acetylglucosamine-1-phosphate uridyltransferase family. It in the C-terminal section; belongs to the transferase hexapeptide repeat family. As to quaternary structure, homotrimer. The cofactor is Mg(2+).

The protein localises to the cytoplasm. The enzyme catalyses alpha-D-glucosamine 1-phosphate + acetyl-CoA = N-acetyl-alpha-D-glucosamine 1-phosphate + CoA + H(+). It catalyses the reaction N-acetyl-alpha-D-glucosamine 1-phosphate + UTP + H(+) = UDP-N-acetyl-alpha-D-glucosamine + diphosphate. The protein operates within nucleotide-sugar biosynthesis; UDP-N-acetyl-alpha-D-glucosamine biosynthesis; N-acetyl-alpha-D-glucosamine 1-phosphate from alpha-D-glucosamine 6-phosphate (route II): step 2/2. Its pathway is nucleotide-sugar biosynthesis; UDP-N-acetyl-alpha-D-glucosamine biosynthesis; UDP-N-acetyl-alpha-D-glucosamine from N-acetyl-alpha-D-glucosamine 1-phosphate: step 1/1. It functions in the pathway bacterial outer membrane biogenesis; LPS lipid A biosynthesis. In terms of biological role, catalyzes the last two sequential reactions in the de novo biosynthetic pathway for UDP-N-acetylglucosamine (UDP-GlcNAc). The C-terminal domain catalyzes the transfer of acetyl group from acetyl coenzyme A to glucosamine-1-phosphate (GlcN-1-P) to produce N-acetylglucosamine-1-phosphate (GlcNAc-1-P), which is converted into UDP-GlcNAc by the transfer of uridine 5-monophosphate (from uridine 5-triphosphate), a reaction catalyzed by the N-terminal domain. This chain is Bifunctional protein GlmU, found in Xanthomonas axonopodis pv. citri (strain 306).